Consider the following 1451-residue polypeptide: ABC transporter G family member 32 (1451 aa).

The ABC transporter 1 domain occupies 162–435 (GNALHISPTR…FELMGFRCPQ (274 aa)). Residue 195 to 202 (GPPGSGKT) participates in ATP binding. The ABC transmembrane type-2 1 domain occupies 513 to 725 (ALLKANIDRE…AQNAISTNEF (213 aa)). 6 helical membrane passes run 531–551 (FVYI…MTTF), 563–583 (GTIY…NGFA), 618–638 (IPVT…VVGF), 650–670 (LLLV…AGIG), 674–694 (VVSQ…GGFI), and 760–780 (IGFG…TVAL). The segment at 809-835 (ILDSCEEKKSRKKEQSQSVNQKHWNNT) is disordered. Over residues 813 to 823 (CEEKKSRKKEQ) the composition is skewed to basic and acidic residues. Positions 853–1105 (LSFNDIKYSV…KLIEYFEGIE (253 aa)) constitute an ABC transporter 2 domain. Position 898–905 (898–905 (GVSGAGKT)) interacts with ATP. Positions 1178–1392 (TQCIACLWKH…TLYGLVASQF (215 aa)) constitute an ABC transmembrane type-2 2 domain. The next 7 membrane-spanning stretches (helical) occupy residues 1197–1217 (YTAV…TMFW), 1237–1257 (YAAV…VVVV), 1285–1305 (LPYI…MIGF), 1312–1332 (FIWY…FGMM), 1342–1362 (IAAI…GYLI), 1373–1393 (WYCW…SQFG), and 1423–1443 (LVAV…SFAI).

This sequence belongs to the ABC transporter superfamily. ABCG family. PDR (TC 3.A.1.205) subfamily.

The protein localises to the membrane. Functionally, may be a general defense protein. The chain is ABC transporter G family member 32 from Oryza sativa subsp. japonica (Rice).